The sequence spans 180 residues: ATP-dependent protease subunit HslV (180 aa).

Residue Thr-10 is part of the active site. Na(+)-binding residues include Gly-165, Cys-168, and Thr-171.

The protein belongs to the peptidase T1B family. HslV subfamily. A double ring-shaped homohexamer of HslV is capped on each side by a ring-shaped HslU homohexamer. The assembly of the HslU/HslV complex is dependent on binding of ATP.

It localises to the cytoplasm. It catalyses the reaction ATP-dependent cleavage of peptide bonds with broad specificity.. Its activity is regulated as follows. Allosterically activated by HslU binding. Its function is as follows. Protease subunit of a proteasome-like degradation complex believed to be a general protein degrading machinery. In Koribacter versatilis (strain Ellin345), this protein is ATP-dependent protease subunit HslV.